Here is a 205-residue protein sequence, read N- to C-terminus: Small ribosomal subunit protein uS2 (205 aa).

It belongs to the universal ribosomal protein uS2 family.

This Aeropyrum pernix (strain ATCC 700893 / DSM 11879 / JCM 9820 / NBRC 100138 / K1) protein is Small ribosomal subunit protein uS2 (rps2).